Consider the following 331-residue polypeptide: Protein RecA (331 aa).

66–73 contributes to the ATP binding site; it reads GPESSGKT.

This sequence belongs to the RecA family.

It is found in the cytoplasm. In terms of biological role, can catalyze the hydrolysis of ATP in the presence of single-stranded DNA, the ATP-dependent uptake of single-stranded DNA by duplex DNA, and the ATP-dependent hybridization of homologous single-stranded DNAs. It interacts with LexA causing its activation and leading to its autocatalytic cleavage. This chain is Protein RecA, found in Acholeplasma laidlawii (strain PG-8A).